Here is an 858-residue protein sequence, read N- to C-terminus: GDP-fucose protein O-fucosyltransferase 2 (858 aa).

Over 1 to 150 (MHCQLGGQAR…RPPCLLNHRR (150 aa)) the chain is Cytoplasmic. Residues 151–171 (LLLGLVSVLTVFLSCLPFTNA) traverse the membrane as a helical; Signal-anchor for type II membrane protein segment. Residues 172–858 (TVSPAALQDV…WPSLDPSSTL (687 aa)) are Lumenal-facing. 237–241 (GEGFH) lines the GDP-beta-L-fucose pocket. Glu-238 acts as the Proton acceptor in catalysis. The interval 448–510 (AALTPQERQR…SRSRKEIQEE (63 aa)) is disordered. Residues 486-510 (DGEREKRKPGRRSDTSRSRKEIQEE) show a composition bias toward basic and acidic residues. GDP-beta-L-fucose is bound by residues 646–648 (HLR) and 787–788 (RF). The interval 819–858 (TGGQAQGKCFATKSHDPPEGRSRSELRRKYWPSLDPSSTL) is disordered. Positions 831–846 (KSHDPPEGRSRSELRR) are enriched in basic and acidic residues.

The protein belongs to the glycosyltransferase 68 family.

It is found in the endoplasmic reticulum membrane. It catalyses the reaction L-seryl-[protein] + GDP-beta-L-fucose = 3-O-(alpha-L-fucosyl)-L-seryl-[protein] + GDP + H(+). It carries out the reaction L-threonyl-[protein] + GDP-beta-L-fucose = 3-O-(alpha-L-fucosyl)-L-threonyl-[protein] + GDP + H(+). The protein operates within protein modification; protein glycosylation. Catalyzes the reaction that attaches fucose through an O-glycosidic linkage to a conserved serine or threonine residue in the consensus sequence C1-X-X-S/T-C2 of thrombospondin type I repeats (TSRs) where C1 and C2 are the first and second cysteines of the repeat, respectively. O-fucosylates microneme protein MIC2 and may play a role in its stabilization. Probably by regulating protein O-fucosylation, may play a role in tachyzoite adhesion to and/or invasion of host cells; however, POFUT2 involvement in adhesion/invasion is controversial. This Toxoplasma gondii (strain ATCC 50853 / GT1) protein is GDP-fucose protein O-fucosyltransferase 2.